Here is a 167-residue protein sequence, read N- to C-terminus: Elafin (167 aa).

Residues 1-21 form the signal peptide; sequence MRSRSFLVLVVVFLICGTLVA. A propeptide spanning residues 22-70 is cleaved from the precursor; sequence QAAGRIRRPKGKGTKKILALVKGQGPVRGKDQVKGQGPVKGQDLGKSQD. 12 consecutive repeat copies span residues 44-49, 50-55, 56-61, 62-67, 68-73, 74-79, 80-85, 86-91, 92-97, 98-103, 104-109, and 110-115. Residues 44-115 are 12 X 6 AA tandem repeats of [GSAL]-[QEK]-[DGLP]-[APSLQ]-[VGDFI]-[KR]; the sequence is GQGPVRGKDQ…DPVKAQPAIK (72 aa). A disordered region spans residues 46 to 104; sequence GPVRGKDQVKGQGPVKGQDLGKSQDPVKAQLPDKGQDLGKGEDSVKGQDPFKAQLPDKL. The segment at 78-126 is 2 X tandem repeats of SVP-1 like motif; it reads DKGQDLGKGEDSVKGQDPFKAQLPDKLQDPVKAQPAIKRLILLTKPGSC. Over residues 79–91 the composition is skewed to basic and acidic residues; it reads KGQDLGKGEDSVK. SVP-1 clotting repeat units lie at residues 80–101 and 104–126; these read GQDL…AQLP and LQDP…PGSC. Residues 119 to 167 form the WAP domain; that stretch reads LLTKPGSCPRILIRCLMVNPPNRCLSDAQCPGLKKCCEGFCGKACMDPK. Cystine bridges form between C126–C155, C133–C159, C142–C154, and C148–C163.

Trachea and large intestine.

Functionally, neutrophil and pancreatic elastase-specific inhibitor of skin. It may prevent elastase-mediated tissue proteolysis. This is Elafin from Sus scrofa (Pig).